The chain runs to 526 residues: Phosphoenolpyruvate carboxykinase (ATP) 2 (526 aa).

Residues Arg-55, Tyr-190, and Lys-196 each contribute to the substrate site. ATP-binding positions include Lys-196, His-215, and 231 to 239; that span reads GLSGTGKTT. Mn(2+) contacts are provided by Lys-196 and His-215. Asp-252 provides a ligand contact to Mn(2+). Residues Glu-280, Arg-317, and Thr-442 each coordinate ATP. Residue Arg-317 coordinates substrate.

This sequence belongs to the phosphoenolpyruvate carboxykinase (ATP) family. It depends on Mn(2+) as a cofactor.

It localises to the cytoplasm. The enzyme catalyses oxaloacetate + ATP = phosphoenolpyruvate + ADP + CO2. It functions in the pathway carbohydrate biosynthesis; gluconeogenesis. Its function is as follows. Involved in the gluconeogenesis. Catalyzes the conversion of oxaloacetate (OAA) to phosphoenolpyruvate (PEP) through direct phosphoryl transfer between the nucleoside triphosphate and OAA. This Moorella thermoacetica (strain ATCC 39073 / JCM 9320) protein is Phosphoenolpyruvate carboxykinase (ATP) 2.